We begin with the raw amino-acid sequence, 116 residues long: Large ribosomal subunit protein bL19 (116 aa).

Belongs to the bacterial ribosomal protein bL19 family.

In terms of biological role, this protein is located at the 30S-50S ribosomal subunit interface and may play a role in the structure and function of the aminoacyl-tRNA binding site. This is Large ribosomal subunit protein bL19 from Haemophilus ducreyi (strain 35000HP / ATCC 700724).